We begin with the raw amino-acid sequence, 981 residues long: Amidohydrolase tasK (981 aa).

The tract at residues 1–36 (MDDQKGPLPPYTPTATAPPPASMRQRRPPGRRRALR) is disordered. Pro residues predominate over residues 7–21 (PLPPYTPTATAPPPA). Basic residues predominate over residues 24 to 36 (RQRRPPGRRRALR). Residues 40-57 (TVRVLALACLAFVVLAQW) form a helical membrane-spanning segment. Residues 86-107 (LRVRPQDPAGPGRSKNDRYLDG) form a disordered region. 2 residues coordinate Fe(2+): histidine 187 and histidine 189. Residues histidine 187 and histidine 189 each contribute to the Zn(2+) site. A glycan (N-linked (GlcNAc...) asparagine) is linked at asparagine 407. The disordered stretch occupies residues 819-838 (KKQQKQQQQQQQQQQQQHGT). Over residues 823–835 (KQQQQQQQQQQQQ) the composition is skewed to low complexity. The N-linked (GlcNAc...) asparagine glycan is linked to asparagine 891.

The protein belongs to the metallo-dependent hydrolases superfamily. Fe(2+) serves as cofactor. Mn(2+) is required as a cofactor. The cofactor is Zn(2+).

The protein localises to the membrane. Amidohydrolase; part of the gene cluster that mediates the biosynthesis of the tetramic acids Sch210971 and Sch210972, potential anti-HIV fungal natural product that contain a decalin core. The PKS module of tasS together with the enoylreductase tasC catalyze the formation of the polyketide unit which is then conjugated to 4-hydroxyl-4-methyl glutamate (HMG) by the condensation domain of the tasS NRPS module. One unique structural feature of Sch210971 and Sch210972 is the tetramic acid motif proposed to be derived from the non-proteinogenic amino acid HMG, by a Dieckmann-type condensation catalyzed by the reductase domain of tasS. The aldolase tasA catalyzes the aldol condensation of 2 molecules of pyruvic acid to yield the intermediate 4-hydroxyl-4-methyl-2-oxoglutarate (HMOG), which can then be stereoselectively transaminated, may be by tasG, to form HMG. The Diels-Alderase tas3 then uses the Dieckmann product of tasS as substrate and catalyzes the Diels-Alder cycloaddition to form the decalin ring of Sch210971 and Sch210972. This Hapsidospora irregularis protein is Amidohydrolase tasK.